The sequence spans 72 residues: Large ribosomal subunit protein uL29 (72 aa).

The protein belongs to the universal ribosomal protein uL29 family.

In Chlamydia felis (strain Fe/C-56) (Chlamydophila felis), this protein is Large ribosomal subunit protein uL29.